The primary structure comprises 174 residues: Superoxide dismutase [Cu-Zn] (174 aa).

An N-terminal signal peptide occupies residues 1–23 (MIRLSAAAALGLAAALAASPALA). Residues His-68, His-70, and His-86 each coordinate Cu cation. Cys-75 and Cys-170 are joined by a disulfide. Positions 86, 95, 104, and 107 each coordinate Zn(2+). A Cu cation-binding site is contributed by His-150.

Belongs to the Cu-Zn superoxide dismutase family. As to quaternary structure, homodimer. The cofactor is Cu cation. Zn(2+) serves as cofactor.

The protein resides in the periplasm. It carries out the reaction 2 superoxide + 2 H(+) = H2O2 + O2. Its function is as follows. Destroys radicals which are normally produced within the cells and which are toxic to biological systems. May function against extracytoplasmic toxic oxygen species. The chain is Superoxide dismutase [Cu-Zn] (sodC) from Caulobacter vibrioides (strain ATCC 19089 / CIP 103742 / CB 15) (Caulobacter crescentus).